A 154-amino-acid polypeptide reads, in one-letter code: Large ribosomal subunit protein uL23z (154 aa).

Belongs to the universal ribosomal protein uL23 family.

In terms of biological role, binds to a specific region on the 26S rRNA. This Arabidopsis thaliana (Mouse-ear cress) protein is Large ribosomal subunit protein uL23z (RPL23AA).